A 149-amino-acid chain; its full sequence is Urease accessory protein UreE (149 aa).

This sequence belongs to the UreE family.

The protein resides in the cytoplasm. Its function is as follows. Involved in urease metallocenter assembly. Binds nickel. Probably functions as a nickel donor during metallocenter assembly. The sequence is that of Urease accessory protein UreE from Prochlorococcus marinus (strain MIT 9215).